Here is a 354-residue protein sequence, read N- to C-terminus: UDP-N-acetylglucosamine--N-acetylmuramyl-(pentapeptide) pyrophosphoryl-undecaprenol N-acetylglucosamine transferase (354 aa).

UDP-N-acetyl-alpha-D-glucosamine is bound by residues 11-13 (TAG), Arg-164, Ser-194, and Gln-289.

The protein belongs to the glycosyltransferase 28 family. MurG subfamily.

It localises to the cell membrane. It carries out the reaction di-trans,octa-cis-undecaprenyl diphospho-N-acetyl-alpha-D-muramoyl-L-alanyl-D-glutamyl-meso-2,6-diaminopimeloyl-D-alanyl-D-alanine + UDP-N-acetyl-alpha-D-glucosamine = di-trans,octa-cis-undecaprenyl diphospho-[N-acetyl-alpha-D-glucosaminyl-(1-&gt;4)]-N-acetyl-alpha-D-muramoyl-L-alanyl-D-glutamyl-meso-2,6-diaminopimeloyl-D-alanyl-D-alanine + UDP + H(+). It functions in the pathway cell wall biogenesis; peptidoglycan biosynthesis. Functionally, cell wall formation. Catalyzes the transfer of a GlcNAc subunit on undecaprenyl-pyrophosphoryl-MurNAc-pentapeptide (lipid intermediate I) to form undecaprenyl-pyrophosphoryl-MurNAc-(pentapeptide)GlcNAc (lipid intermediate II). In Clostridium botulinum (strain 657 / Type Ba4), this protein is UDP-N-acetylglucosamine--N-acetylmuramyl-(pentapeptide) pyrophosphoryl-undecaprenol N-acetylglucosamine transferase.